Reading from the N-terminus, the 281-residue chain is MISNRNNNTSIHNATVENVEGKYKSIGDISTEMLNPVIIDKTVWTIFNNLNIDVQYPLELECYLNIVEKSYNIIYENKFSINWLPTMGTACFRAILGDKNVTITCNILQAIIISLFNDTNNLSASSVYNKTGIQYDLSEKILESLFEANIVTRKYSSNDTVYIVNTHNYTGDTNINIINEFIELFETPVNSSNSSVNLSMDKKSDDSKIQETDISTAETDVKFLGDEDYVDGNEDCISDNEDAKKYDSDTDSDLGDLEDPNEPKLIVDSCSDCSESDSEEY.

Disordered regions lie at residues 192–212 (SNSS…IQET) and 227–281 (EDYV…SEEY). Basic and acidic residues predominate over residues 200–211 (MDKKSDDSKIQE). Composition is skewed to acidic residues over residues 227 to 240 (EDYV…ISDN) and 249 to 260 (DTDSDLGDLEDP).

This sequence belongs to the cullin family.

This is an uncharacterized protein from Acanthamoeba polyphaga (Amoeba).